Consider the following 186-residue polypeptide: Peptide deformylase (186 aa).

Residues C94 and H136 each contribute to the Fe cation site. Residue E137 is part of the active site. H140 is a binding site for Fe cation.

It belongs to the polypeptide deformylase family. Requires Fe(2+) as cofactor.

It catalyses the reaction N-terminal N-formyl-L-methionyl-[peptide] + H2O = N-terminal L-methionyl-[peptide] + formate. Removes the formyl group from the N-terminal Met of newly synthesized proteins. Requires at least a dipeptide for an efficient rate of reaction. N-terminal L-methionine is a prerequisite for activity but the enzyme has broad specificity at other positions. The protein is Peptide deformylase of Prosthecochloris aestuarii (strain DSM 271 / SK 413).